A 333-amino-acid polypeptide reads, in one-letter code: tRNA N6-adenosine threonylcarbamoyltransferase (333 aa).

Fe cation-binding residues include His111 and His115. Substrate-binding positions include 134–138, Asp167, Gly180, and Asn272; that span reads LVSGG. Residue Asp300 coordinates Fe cation.

This sequence belongs to the KAE1 / TsaD family. The cofactor is Fe(2+).

Its subcellular location is the cytoplasm. It catalyses the reaction L-threonylcarbamoyladenylate + adenosine(37) in tRNA = N(6)-L-threonylcarbamoyladenosine(37) in tRNA + AMP + H(+). In terms of biological role, required for the formation of a threonylcarbamoyl group on adenosine at position 37 (t(6)A37) in tRNAs that read codons beginning with adenine. Is involved in the transfer of the threonylcarbamoyl moiety of threonylcarbamoyl-AMP (TC-AMP) to the N6 group of A37, together with TsaE and TsaB. TsaD likely plays a direct catalytic role in this reaction. In Legionella pneumophila (strain Paris), this protein is tRNA N6-adenosine threonylcarbamoyltransferase.